The primary structure comprises 342 residues: Tryptophan--tRNA ligase (342 aa).

Residues Gln19 to Ser21 and Gly27 to Asn28 each bind ATP. A 'HIGH' region motif is present at residues Pro20–Asn28. Residue Asp143 participates in L-tryptophan binding. ATP is bound by residues Gly155–Asp157, Val194, and Lys203–Ser207. Residues Lys203–Ser207 carry the 'KMSKS' region motif.

The protein belongs to the class-I aminoacyl-tRNA synthetase family. Homodimer.

The protein localises to the cytoplasm. It catalyses the reaction tRNA(Trp) + L-tryptophan + ATP = L-tryptophyl-tRNA(Trp) + AMP + diphosphate + H(+). Its function is as follows. Catalyzes the attachment of tryptophan to tRNA(Trp). This chain is Tryptophan--tRNA ligase, found in Yersinia pestis.